A 463-amino-acid chain; its full sequence is uncharacterized protein (463 aa).

A run of 6 helical transmembrane segments spans residues 3–23, 88–108, 112–132, 216–236, 245–265, and 276–296; these read IPPEVHSGLLSAGCGPGSLLV, VAAAAAYCSALAAMPTPAELA, AIHGVLIATNFFGINTVPIAL, FSPAVTVVLALVALQLYDFLW, LLLLPFFTPTLSALTALSALI, and LPIAAALGPGDQWGANLAVAV. The disordered stretch occupies residues 303 to 322; the sequence is VPGGSPPTSNPAPAAPSSNS. Residues 306-316 are compositionally biased toward pro residues; sequence GSPPTSNPAPA. Transmembrane regions (helical) follow at residues 323–343 and 419–439; these read VGSASAAPGISYAVPGLAPPG and AGTLGFAGTAPTTSGAAAGMV.

Belongs to the mycobacterial PPE family.

It localises to the cell membrane. This is an uncharacterized protein from Mycobacterium tuberculosis (strain CDC 1551 / Oshkosh).